The chain runs to 281 residues: 2-dehydro-3-deoxyphosphooctonate aldolase (281 aa).

It belongs to the KdsA family.

The protein localises to the cytoplasm. The catalysed reaction is D-arabinose 5-phosphate + phosphoenolpyruvate + H2O = 3-deoxy-alpha-D-manno-2-octulosonate-8-phosphate + phosphate. It functions in the pathway carbohydrate biosynthesis; 3-deoxy-D-manno-octulosonate biosynthesis; 3-deoxy-D-manno-octulosonate from D-ribulose 5-phosphate: step 2/3. The protein operates within bacterial outer membrane biogenesis; lipopolysaccharide biosynthesis. This chain is 2-dehydro-3-deoxyphosphooctonate aldolase, found in Marinobacter nauticus (strain ATCC 700491 / DSM 11845 / VT8) (Marinobacter aquaeolei).